Reading from the N-terminus, the 429-residue chain is Nicotinate phosphoribosyltransferase (429 aa).

3 residues coordinate nicotinate: tyrosine 15, phenylalanine 177, and threonine 229. Histidine 232 is subject to Phosphohistidine; by autocatalysis. Arginine 294 contacts nicotinate. Threonine 355 lines the 5-phospho-alpha-D-ribose 1-diphosphate pocket.

Belongs to the NAPRTase family. Post-translationally, transiently phosphorylated on a His residue during the reaction cycle. Phosphorylation strongly increases the affinity for substrates and increases the rate of nicotinate D-ribonucleotide production. Dephosphorylation regenerates the low-affinity form of the enzyme, leading to product release.

It is found in the cytoplasm. It localises to the nucleus. It carries out the reaction nicotinate + 5-phospho-alpha-D-ribose 1-diphosphate + ATP + H2O = nicotinate beta-D-ribonucleotide + ADP + phosphate + diphosphate. The protein operates within cofactor biosynthesis; NAD(+) biosynthesis; nicotinate D-ribonucleotide from nicotinate: step 1/1. Catalyzes the first step in the biosynthesis of NAD from nicotinic acid, the ATP-dependent synthesis of beta-nicotinate D-ribonucleotide from nicotinate and 5-phospho-D-ribose 1-phosphate. Essential for growth under anaerobic conditions. This Saccharomyces cerevisiae (strain ATCC 204508 / S288c) (Baker's yeast) protein is Nicotinate phosphoribosyltransferase (NPT1).